We begin with the raw amino-acid sequence, 37 residues long: MKIRASVRKICEKCRLIRRRKRIMVICFNPKHKQKQG.

It belongs to the bacterial ribosomal protein bL36 family.

It is found in the plastid. The protein resides in the chloroplast. This chain is Large ribosomal subunit protein bL36c, found in Psilotum nudum (Whisk fern).